A 535-amino-acid polypeptide reads, in one-letter code: BAR/IMD domain-containing adapter protein 2 (535 aa).

The IMD domain maps to Met-1–Ser-250. Positions Met-1 to Asn-251 form a coiled coil. 4 positions are modified to phosphoserine: Ser-262, Ser-324, Ser-326, and Ser-337. The disordered stretch occupies residues Ser-308–Ala-370. Residues Gln-321 to Ser-335 show a composition bias toward low complexity. Thr-341 carries the post-translational modification Phosphothreonine. Phosphoserine is present on Ser-347. Over residues Thr-349–Met-368 the composition is skewed to polar residues. Thr-361 carries the phosphothreonine modification. 4 positions are modified to phosphoserine: Ser-367, Ser-385, Ser-396, and Ser-455. Residues Asn-375–Ser-438 enclose the SH3 domain. Residues His-445–Thr-486 are disordered. 2 stretches are compositionally biased toward polar residues: residues Ser-447 to Asn-458 and Gly-473 to Thr-486.

As to quaternary structure, homodimer. Interacts with CDC42 and RAC1 that have been activated by GTP binding. Binds TIAM1. Interacts with ATN1, ADGRB1, DIAPH1, EPS8, SHANK1, SHANK2, SHANK3, WASF1 and WASF2. Interacts with ENAH after recruitment of CDC42. Phosphorylated on tyrosine residues by INSR in response to insulin treatment. As to expression, ubiquitous.

The protein localises to the cytoplasm. Its subcellular location is the membrane. The protein resides in the cell projection. It is found in the filopodium. It localises to the ruffle. The protein localises to the cytoskeleton. Adapter protein that links membrane-bound small G-proteins to cytoplasmic effector proteins. Necessary for CDC42-mediated reorganization of the actin cytoskeleton and for RAC1-mediated membrane ruffling. Involved in the regulation of the actin cytoskeleton by WASF family members and the Arp2/3 complex. Plays a role in neurite growth. Acts syngeristically with ENAH to promote filipodia formation. Plays a role in the reorganization of the actin cytoskeleton in response to bacterial infection. Participates in actin bundling when associated with EPS8, promoting filopodial protrusions. This Rattus norvegicus (Rat) protein is BAR/IMD domain-containing adapter protein 2 (Baiap2).